The chain runs to 503 residues: Cysteine--tRNA ligase (503 aa).

Position 31 (Cys31) interacts with Zn(2+). The 'HIGH' region motif lies at 33 to 43 (PTVYDYAHIGN). The Zn(2+) site is built by Cys225, His264, and Glu268. The short motif at 297–301 (KMSKS) is the 'KMSKS' region element. Lys300 is a binding site for ATP.

The protein belongs to the class-I aminoacyl-tRNA synthetase family. As to quaternary structure, monomer. Zn(2+) is required as a cofactor.

The protein resides in the cytoplasm. It carries out the reaction tRNA(Cys) + L-cysteine + ATP = L-cysteinyl-tRNA(Cys) + AMP + diphosphate. The chain is Cysteine--tRNA ligase from Bartonella tribocorum (strain CIP 105476 / IBS 506).